A 98-amino-acid polypeptide reads, in one-letter code: Transcription elongation factor A protein-like 7 (98 aa).

Over residues Met-1–Pro-24 the composition is skewed to basic and acidic residues. The segment at Met-1–Gln-31 is disordered. Residues Gly-59 to Asn-89 are a coiled coil.

It belongs to the TFS-II family. TFA subfamily.

The protein localises to the nucleus. Plays a role in the negative regulation of NF-kappa-B signaling at the basal level by modulating transcriptional activity of NF-kappa-B on its target gene promoters. Associates with cyclin D1 promoter containing Myc E-box sequence and transcriptionally represses cyclin D1 expression. Regulates telomerase reverse transcriptase expression and telomerase activity in both ALT (alternative lengthening of telomeres)and telomerase-positive cell lines. The chain is Transcription elongation factor A protein-like 7 (Tceal7) from Rattus norvegicus (Rat).